Here is a 154-residue protein sequence, read N- to C-terminus: Superoxide dismutase [Cu-Zn] (154 aa).

Residues H47, H49, and H64 each contribute to the Cu cation site. C58 and C147 are joined by a disulfide. Zn(2+) is bound by residues H64, H72, H81, and D84. Cu cation is bound at residue H121. Residue R144 coordinates substrate.

The protein belongs to the Cu-Zn superoxide dismutase family. As to quaternary structure, homodimer. Cu cation serves as cofactor. Requires Zn(2+) as cofactor.

It is found in the cytoplasm. It catalyses the reaction 2 superoxide + 2 H(+) = H2O2 + O2. Its function is as follows. Destroys radicals which are normally produced within the cells and which are toxic to biological systems. The chain is Superoxide dismutase [Cu-Zn] (SOD1) from Claviceps purpurea (strain 20.1) (Ergot fungus).